The sequence spans 622 residues: Chaperone protein HscA homolog (622 aa).

The protein belongs to the heat shock protein 70 family.

Its function is as follows. Chaperone involved in the maturation of iron-sulfur cluster-containing proteins. Has a low intrinsic ATPase activity which is markedly stimulated by HscB. This is Chaperone protein HscA homolog from Aromatoleum aromaticum (strain DSM 19018 / LMG 30748 / EbN1) (Azoarcus sp. (strain EbN1)).